We begin with the raw amino-acid sequence, 424 residues long: Serine--tRNA ligase (424 aa).

L-serine is bound at residue 231–233 (TAE). 262–264 (RSE) is a binding site for ATP. Glu-285 provides a ligand contact to L-serine. ATP is bound at residue 349–352 (EISS). Ser-385 lines the L-serine pocket.

It belongs to the class-II aminoacyl-tRNA synthetase family. Type-1 seryl-tRNA synthetase subfamily. In terms of assembly, homodimer. The tRNA molecule binds across the dimer.

The protein resides in the cytoplasm. The catalysed reaction is tRNA(Ser) + L-serine + ATP = L-seryl-tRNA(Ser) + AMP + diphosphate + H(+). The enzyme catalyses tRNA(Sec) + L-serine + ATP = L-seryl-tRNA(Sec) + AMP + diphosphate + H(+). It functions in the pathway aminoacyl-tRNA biosynthesis; selenocysteinyl-tRNA(Sec) biosynthesis; L-seryl-tRNA(Sec) from L-serine and tRNA(Sec): step 1/1. In terms of biological role, catalyzes the attachment of serine to tRNA(Ser). Is also able to aminoacylate tRNA(Sec) with serine, to form the misacylated tRNA L-seryl-tRNA(Sec), which will be further converted into selenocysteinyl-tRNA(Sec). This Bacillus cereus (strain ZK / E33L) protein is Serine--tRNA ligase.